A 349-amino-acid polypeptide reads, in one-letter code: D-alanine--D-alanine ligase (349 aa).

The region spanning 132–335 is the ATP-grasp domain; that stretch reads KHVFEAVGVP…YSDLIEKLVD (204 aa). 162–217 provides a ligand contact to ATP; the sequence is VEKLEFPVFVKPANMGSSVGISKVDDLADLQPALSEAYKYDNRVVIEQGVDAREIE. Mg(2+) contacts are provided by D289, E302, and N304.

It belongs to the D-alanine--D-alanine ligase family. Mg(2+) is required as a cofactor. It depends on Mn(2+) as a cofactor.

The protein localises to the cytoplasm. It catalyses the reaction 2 D-alanine + ATP = D-alanyl-D-alanine + ADP + phosphate + H(+). It participates in cell wall biogenesis; peptidoglycan biosynthesis. In terms of biological role, cell wall formation. The chain is D-alanine--D-alanine ligase from Lactococcus lactis subsp. cremoris (strain SK11).